The sequence spans 108 residues: Circadian clock oscillator protein KaiB (108 aa).

It belongs to the KaiB family. Homodimer, interacts with KaiC. The KaiABC complex composition changes during the circadian cycle to control KaiC phosphorylation. Complexes KaiC(6), KaiA(2-4):KaiC(6), KaiB(6):KaiC(6) and KaiC(6):KaiB(6):KaiA(12) are among the most important forms, many form cooperatively. Undergoes a major conformational rearrangment; in the free state forms homotetramers as a dimer of dimers. When bound to the CI domain of KaiC switches to a monomeric thioredoxin-fold (KaiB(fs)). KaiB(fs) binds CikA, leading it to dephosphorylate phospho-RpaA.

Key component of the KaiABC oscillator complex, which constitutes the main circadian regulator in cyanobacteria. Complex composition changes during the circadian cycle to control KaiC phosphorylation. KaiA stimulates KaiC autophosphorylation, while KaiB sequesters KaiA, leading to KaiC autodephosphorylation. Phospho-Ser-431 KaiC accumulation triggers binding of KaiB to form the KaiB(6):KaiC(6) complex, leading to changes in output regulators CikA and SasA. KaiB switches to a thioredoxin-like fold (KaiB(fs)) when bound to KaiC. KaiB(6):KaiC(6) formation exposes a site for KaiA binding that sequesters KaiA from KaiC, making the KaiC(6):KaiB(6):KaiA(12) complex that results in KaiC autodephosphorylation. Functionally, a metamorphic protein which reversibly switches between an inactive tetrameric fold and a rare, thioredoxin-like monomeric fold (KaiB(fs)). KaiB(fs) binds phospho-KaiC, KaiA and CikA. KaiA and CikA compete for binding to KaiB(fs), and KaiB(fs) and SasA compete for binding to KaiC, thus the clock oscillator and output signal pathway are tightly coupled. This Nostoc sp. (strain PCC 7120 / SAG 25.82 / UTEX 2576) protein is Circadian clock oscillator protein KaiB.